We begin with the raw amino-acid sequence, 247 residues long: MRGIVGFYITYLLCLILGIACVVLVVHWNFMYRDGFAWDGSSKNFNWHPVLMVTGMLVLYGNAAVVYRIPLTWGHNKLPWKLLHAGLLLLSFIFSVIGLCAVFNFHNVHHTANLYSLHSWVGICTAALFTAQWVMGFTSFLLPCTPMAVRAFVKPTHVWMGAMILVLSIVSCISGINEKLFFVLKETTNGTKPYSALPPEAVAANSLGVIIVAFGLVVLKILSNQMWQRPEPGDDEGVYRPLAYDGS.

Residues 1–3 are Cytoplasmic-facing; sequence MRG. The helical transmembrane segment at 4 to 24 threads the bilayer; sequence IVGFYITYLLCLILGIACVVL. The Cytochrome b561 domain maps to 13 to 223; sequence LCLILGIACV…FGLVVLKILS (211 aa). The Lumenal segment spans residues 25–46; that stretch reads VVHWNFMYRDGFAWDGSSKNFN. Residues 47–67 form a helical membrane-spanning segment; sequence WHPVLMVTGMLVLYGNAAVVY. Positions 48 and 68 each coordinate heme b. The Cytoplasmic portion of the chain corresponds to 68–82; it reads RIPLTWGHNKLPWKL. L-ascorbate-binding residues include Lys-77 and Lys-81. Residues 83-103 form a helical membrane-spanning segment; it reads LHAGLLLLSFIFSVIGLCAVF. Heme b is bound by residues His-84, 113–116, and His-118; that span reads NLYS. Residues 104-120 lie on the Lumenal side of the membrane; the sequence is NFHNVHHTANLYSLHSW. The helical transmembrane segment at 121–141 threads the bilayer; that stretch reads VGICTAALFTAQWVMGFTSFL. Residues 142–155 lie on the Cytoplasmic side of the membrane; it reads LPCTPMAVRAFVKP. Residue Arg-150 participates in L-ascorbate binding. The chain crosses the membrane as a helical span at residues 156–176; the sequence is THVWMGAMILVLSIVSCISGI. Residues His-157 and Glu-178 each contribute to the heme b site. The Lumenal segment spans residues 177–201; that stretch reads NEKLFFVLKETTNGTKPYSALPPEA. Residue Asn-189 is glycosylated (N-linked (GlcNAc...) asparagine). Residues 202 to 222 form a helical membrane-spanning segment; the sequence is VAANSLGVIIVAFGLVVLKIL. The Cytoplasmic portion of the chain corresponds to 223–247; the sequence is SNQMWQRPEPGDDEGVYRPLAYDGS. Heme b is bound at residue Gln-228.

As to quaternary structure, homodimer. It depends on heme b as a cofactor.

It is found in the late endosome membrane. It localises to the lysosome membrane. It catalyses the reaction Fe(3+)(out) + L-ascorbate(in) = monodehydro-L-ascorbate radical(in) + Fe(2+)(out) + H(+). Transmembrane reductase that uses ascorbate as an electron donor in the cytoplasm and transfers electrons across membranes to reduce iron cations Fe(3+) into Fe(2+) in the lumen of the late endosome and lysosome. Reduced iron can then be extruded from the late endosome and lysosome to the cytoplasm by divalent metal-specific transporters. It is therefore most probably involved in endosomal and lysosomal cellular iron homeostasis. The sequence is that of Lysosomal membrane ascorbate-dependent ferrireductase CYB561A3 (cyb561a3a) from Danio rerio (Zebrafish).